We begin with the raw amino-acid sequence, 553 residues long: Arginine--tRNA ligase (553 aa).

The short motif at 132–140 is the 'HIGH' region element; sequence PTGDLHIGH.

It belongs to the class-I aminoacyl-tRNA synthetase family. Monomer.

The protein resides in the cytoplasm. It catalyses the reaction tRNA(Arg) + L-arginine + ATP = L-arginyl-tRNA(Arg) + AMP + diphosphate. The sequence is that of Arginine--tRNA ligase from Staphylococcus aureus (strain Mu50 / ATCC 700699).